We begin with the raw amino-acid sequence, 513 residues long: NADH-quinone oxidoreductase chain 13 (513 aa).

14 consecutive transmembrane segments (helical) span residues 3-23, 34-54, 81-101, 112-132, 133-153, 164-184, 211-231, 250-270, 277-297, 312-332, 340-360, 383-403, 418-438, and 463-483; these read NLLS…ALFL, AKWL…FVLF, VDGI…LTIL, EYMI…TALD, LVLF…IIGI, FKFF…MIAM, MTVV…SFAV, PTAG…YGFL, FPVA…IAIV, VIAY…FAAN, IFQM…VGVI, AAVF…SGFV, WVAL…LWLY, and WVFI…RLVT.

This sequence belongs to the complex I subunit 4 family. In terms of assembly, NDH-1 is composed of at least 14 different subunits, Nqo1 to Nqo14. The complex has a L-shaped structure, with the hydrophobic arm (subunits Nqo7, Nqo8, Nqo10 to Nqo14) embedded in the inner membrane and the hydrophilic peripheral arm (subunits Nqo1 to Nqo6, Nqo9) protruding into the bacterial cytoplasm. The hydrophilic domain contains all the redox centers.

The protein resides in the cell inner membrane. The catalysed reaction is a quinone + NADH + 5 H(+)(in) = a quinol + NAD(+) + 4 H(+)(out). In terms of biological role, NDH-1 shuttles electrons from NADH, via FMN and iron-sulfur (Fe-S) centers, to quinones in the respiratory chain. The immediate electron acceptor for the enzyme in this species is believed to be ubiquinone. Couples the redox reaction to proton translocation (for every two electrons transferred, four hydrogen ions are translocated across the cytoplasmic membrane), and thus conserves the redox energy in a proton gradient. The polypeptide is NADH-quinone oxidoreductase chain 13 (Paracoccus denitrificans).